We begin with the raw amino-acid sequence, 1103 residues long: PALM2-AKAP2 fusion protein (1103 aa).

2 disordered regions span residues 178-197 and 304-396; these read ESASNATETSGPDMTIKKPP and YNGT…SSRD. Over residues 179–189 the composition is skewed to polar residues; the sequence is SASNATETSGP. Residues serine 322, serine 352, and serine 383 each carry the phosphoserine modification. Residues 380 to 392 show a composition bias toward low complexity; the sequence is VPVSPSSTTSSRC. Residue lysine 405 forms a Glycyl lysine isopeptide (Lys-Gly) (interchain with G-Cter in SUMO1); alternate linkage. A Glycyl lysine isopeptide (Lys-Gly) (interchain with G-Cter in SUMO2); alternate cross-link involves residue lysine 405. Positions 444 to 521 form a coiled coil; that stretch reads EEMLELEKER…QKQLQQQQQQ (78 aa). Disordered stretches follow at residues 483–544 and 566–662; these read EQLD…DKAK and NSRQ…SKLW. The segment covering 490 to 505 has biased composition (basic and acidic residues); sequence LESHKKYKERKERRAQ. A compositionally biased stretch (low complexity) spans 506–521; it reads QEQLLLQKQLQQQQQQ. Residues 522–531 show a composition bias toward polar residues; that stretch reads PPSQLCTAPA. The segment covering 533-544 has biased composition (basic and acidic residues); the sequence is SHERASMIDKAK. Positions 566-579 are enriched in polar residues; that stretch reads NSRQAVAKGQSTPR. Phosphoserine occurs at positions 567 and 624. A compositionally biased stretch (polar residues) spans 633 to 643; it reads AAGSQGNTASQ. Phosphoserine is present on residues serine 692, serine 696, and serine 748. Polar residues predominate over residues 745–763; that stretch reads QENSLADFSLPQTPQTDNP. Residues 745–794 are disordered; sequence QENSLADFSLPQTPQTDNPSEGRGEGVSKSFSDHGFYSPSSTLGDSPLVD. Threonine 757 carries the post-translational modification Phosphothreonine. The PKA-RII subunit binding domain stretch occupies residues 797–810; it reads LEYQAGLLVQNAIQ. Residues 817–829 are compositionally biased toward basic and acidic residues; the sequence is VDKAVSKTSRDGA. Positions 817 to 907 are disordered; it reads VDKAVSKTSR…GPINMEETRP (91 aa). Position 862 is a phosphoserine (serine 862). The span at 865–886 shows a compositional bias: basic and acidic residues; it reads QEKRDVLPKILPAEDRALRERG. Positions 941 to 979 form a coiled coil; it reads KLRSRKQRTLSMIEEEIRAAQEREEELKRQRQVLQSTQS. Phosphoserine is present on residues serine 951, serine 979, serine 1009, and serine 1016. The interval 962–1035 is disordered; that stretch reads EREEELKRQR…AAGTQRPKNL (74 aa). Positions 976-990 are enriched in polar residues; sequence STQSPRTKNAPSLPS.

Expressed in infantile heart and muscle, and fibroblasts.

Its subcellular location is the apical cell membrane. Binds to regulatory subunit (RII) of protein kinase A. May be involved in establishing polarity in signaling systems or in integrating PKA-RII isoforms with downstream effectors to capture, amplify and focus diffuse, trans-cellular signals carried by cAMP. Binds to and modulates the structure of the actin cytoskeleton. This is PALM2-AKAP2 fusion protein from Homo sapiens (Human).